Consider the following 471-residue polypeptide: Ribosome biogenesis protein YTM1 (471 aa).

The tract at residues 10–92 (VTARFTTRDE…ETRLEVEYTR (83 aa)) is ubiquitin-like (UBL) domain. WD repeat units lie at residues 119-158 (SRAG…LATS), 165-203 (GRIT…RTIT), and 210-249 (SHRW…NPVA). The disordered stretch occupies residues 245–274 (ENPVAPSSLLPNSTAASNKRQKLSKPDRTV). Over residues 253 to 262 (LLPNSTAASN) the composition is skewed to polar residues. WD repeat units follow at residues 285-325 (GHSS…CVDT), 327-366 (TTGH…TQIS), 372-412 (GHKN…TGGQ), and 436-471 (GHGE…ALGS). The segment at 412-440 (QVGEGQQGESVHTIHRQGQSGPGKGHGEG) is disordered.

It belongs to the WD repeat WDR12/YTM1 family. Component of the NOP7 complex, composed of ERB1, NOP7 and YTM1. The complex is held together by ERB1, which interacts with NOP7 via its N-terminal domain and with YTM1 via a high-affinity interaction between the seven-bladed beta-propeller domains of the 2 proteins. The NOP7 complex associates with the 66S pre-ribosome. Interacts (via UBL domain) with MDN1 (via VWFA/MIDAS domain).

The protein resides in the nucleus. It is found in the nucleolus. It localises to the nucleoplasm. Its function is as follows. Component of the NOP7 complex, which is required for maturation of the 25S and 5.8S ribosomal RNAs and formation of the 60S ribosome. The sequence is that of Ribosome biogenesis protein YTM1 from Phaeosphaeria nodorum (strain SN15 / ATCC MYA-4574 / FGSC 10173) (Glume blotch fungus).